A 222-amino-acid polypeptide reads, in one-letter code: Phosphoglycolate phosphatase (222 aa).

Catalysis depends on Asp12, which acts as the Nucleophile. Mg(2+)-binding residues include Asp12, Asp14, and Asp175.

It belongs to the HAD-like hydrolase superfamily. CbbY/CbbZ/Gph/YieH family. It depends on Mg(2+) as a cofactor.

It catalyses the reaction 2-phosphoglycolate + H2O = glycolate + phosphate. The protein operates within organic acid metabolism; glycolate biosynthesis; glycolate from 2-phosphoglycolate: step 1/1. In terms of biological role, specifically catalyzes the dephosphorylation of 2-phosphoglycolate. Is involved in the dissimilation of the intracellular 2-phosphoglycolate formed during the DNA repair of 3'-phosphoglycolate ends, a major class of DNA lesions induced by oxidative stress. The chain is Phosphoglycolate phosphatase from Chromobacterium violaceum (strain ATCC 12472 / DSM 30191 / JCM 1249 / CCUG 213 / NBRC 12614 / NCIMB 9131 / NCTC 9757 / MK).